Reading from the N-terminus, the 241-residue chain is Carboxy-S-adenosyl-L-methionine synthase (241 aa).

Residues Tyr-38, 63 to 65 (GCS), 88 to 89 (DN), 116 to 117 (DI), Asn-131, and Arg-198 each bind S-adenosyl-L-methionine.

The protein belongs to the class I-like SAM-binding methyltransferase superfamily. Cx-SAM synthase family. Homodimer.

The enzyme catalyses prephenate + S-adenosyl-L-methionine = carboxy-S-adenosyl-L-methionine + 3-phenylpyruvate + H2O. In terms of biological role, catalyzes the conversion of S-adenosyl-L-methionine (SAM) to carboxy-S-adenosyl-L-methionine (Cx-SAM). The polypeptide is Carboxy-S-adenosyl-L-methionine synthase (Pseudoalteromonas translucida (strain TAC 125)).